The chain runs to 196 residues: Nucleoside triphosphate pyrophosphatase (196 aa).

The active-site Proton acceptor is the Asp70.

Belongs to the Maf family. A divalent metal cation is required as a cofactor.

Its subcellular location is the cytoplasm. The enzyme catalyses a ribonucleoside 5'-triphosphate + H2O = a ribonucleoside 5'-phosphate + diphosphate + H(+). It catalyses the reaction a 2'-deoxyribonucleoside 5'-triphosphate + H2O = a 2'-deoxyribonucleoside 5'-phosphate + diphosphate + H(+). Functionally, nucleoside triphosphate pyrophosphatase. May have a dual role in cell division arrest and in preventing the incorporation of modified nucleotides into cellular nucleic acids. The chain is Nucleoside triphosphate pyrophosphatase from Gloeothece citriformis (strain PCC 7424) (Cyanothece sp. (strain PCC 7424)).